An 847-amino-acid polypeptide reads, in one-letter code: Acyl-homoserine lactone acylase QuiP (847 aa).

The N-terminal stretch at 1–26 (MASPAFMRFLPRCGAAAAFGTLLGLA) is a signal peptide. Serine 265 serves as the catalytic Nucleophile.

The protein belongs to the peptidase S45 family. As to quaternary structure, heterodimer of an alpha subunit and a beta subunit processed from the same precursor.

It is found in the periplasm. The enzyme catalyses an N-acyl-L-homoserine lactone + H2O = L-homoserine lactone + a carboxylate. Catalyzes the deacylation of acyl-homoserine lactone (AHL or acyl-HSL), releasing homoserine lactone (HSL) and the corresponding fatty acid. Possesses a specificity for the degradation of long-chain acyl-HSLs (side chains of seven or more carbons in length). Appears to be the acyl-HSL acylase that underlies the ability of P.aeruginosa to degrade and utilize certain acyl-HSLs as growth nutrients, including one of its own quorum signals, 3-oxo-C12-HSL. Is thought to have a role in quorum quenching. The chain is Acyl-homoserine lactone acylase QuiP (quiP) from Pseudomonas aeruginosa (strain ATCC 15692 / DSM 22644 / CIP 104116 / JCM 14847 / LMG 12228 / 1C / PRS 101 / PAO1).